The sequence spans 273 residues: Ribosomal RNA small subunit methyltransferase A (273 aa).

N18, L20, G45, E66, D91, and N113 together coordinate S-adenosyl-L-methionine.

It belongs to the class I-like SAM-binding methyltransferase superfamily. rRNA adenine N(6)-methyltransferase family. RsmA subfamily.

The protein resides in the cytoplasm. The enzyme catalyses adenosine(1518)/adenosine(1519) in 16S rRNA + 4 S-adenosyl-L-methionine = N(6)-dimethyladenosine(1518)/N(6)-dimethyladenosine(1519) in 16S rRNA + 4 S-adenosyl-L-homocysteine + 4 H(+). In terms of biological role, specifically dimethylates two adjacent adenosines (A1518 and A1519) in the loop of a conserved hairpin near the 3'-end of 16S rRNA in the 30S particle. May play a critical role in biogenesis of 30S subunits. This is Ribosomal RNA small subunit methyltransferase A from Enterobacter sp. (strain 638).